Reading from the N-terminus, the 86-residue chain is Large ribosomal subunit protein uL23 (86 aa).

This sequence belongs to the universal ribosomal protein uL23 family. Part of the 50S ribosomal subunit. Contacts protein L29.

In terms of biological role, binds to 23S rRNA. One of the proteins that surrounds the polypeptide exit tunnel on the outside of the ribosome. The sequence is that of Large ribosomal subunit protein uL23 from Thermococcus gammatolerans (strain DSM 15229 / JCM 11827 / EJ3).